Here is a 99-residue protein sequence, read N- to C-terminus: MAIFRSTLVLLLILFCLTTFELHVHAAEDSQVGEGVVKIDCGGRCKGRCSKSSRPNLCLRACNSCCYRCNCVPPGTAGNHHLCPCYASITTRGGRLKCP.

Residues 1-26 (MAIFRSTLVLLLILFCLTTFELHVHA) form the signal peptide.

This sequence belongs to the GASA family. In terms of processing, six disulfide bonds may be present. Expressed in siliques, dry seeds and vasculature of roots and rosette leaves.

The protein localises to the secreted. In terms of biological role, gibberellin-regulated protein that may function in hormonal controlled steps of development such as seed germination, flowering and seed maturation. This Arabidopsis thaliana (Mouse-ear cress) protein is Gibberellin-regulated protein 3 (GASA3).